We begin with the raw amino-acid sequence, 339 residues long: Ferredoxin--NADP reductase (339 aa).

FAD-binding residues include aspartate 32, glutamine 40, tyrosine 45, valine 85, phenylalanine 120, aspartate 287, and threonine 327.

Belongs to the ferredoxin--NADP reductase type 2 family. In terms of assembly, homodimer. It depends on FAD as a cofactor.

It carries out the reaction 2 reduced [2Fe-2S]-[ferredoxin] + NADP(+) + H(+) = 2 oxidized [2Fe-2S]-[ferredoxin] + NADPH. The protein is Ferredoxin--NADP reductase of Wolbachia sp. subsp. Brugia malayi (strain TRS).